Reading from the N-terminus, the 438-residue chain is GDP-mannose 6-dehydrogenase (438 aa).

Tyr-10, Val-11, Asp-30, Lys-35, Thr-86, and Thr-124 together coordinate NAD(+). Residues Glu-161, Lys-210, Asn-214, His-217, Asn-225, Tyr-256, Tyr-257, Arg-259, Phe-262, and Gly-265 each contribute to the GDP-alpha-D-mannuronate site. The active site involves Cys-268. Lys-271 lines the NAD(+) pocket. Lys-324 lines the GDP-alpha-D-mannuronate pocket. Arg-331 is a binding site for NAD(+).

It belongs to the UDP-glucose/GDP-mannose dehydrogenase family.

The enzyme catalyses GDP-alpha-D-mannose + 2 NAD(+) + H2O = GDP-alpha-D-mannuronate + 2 NADH + 3 H(+). The protein operates within glycan biosynthesis; alginate biosynthesis. Its function is as follows. Catalyzes the oxidation of guanosine diphospho-D-mannose (GDP-D-mannose) to GDP-D-mannuronic acid, a precursor for alginate polymerization. The alginate layer causes a mucoid phenotype and provides a protective barrier against host immune defenses and antibiotics. The sequence is that of GDP-mannose 6-dehydrogenase (algD) from Pseudomonas putida (strain ATCC 47054 / DSM 6125 / CFBP 8728 / NCIMB 11950 / KT2440).